The sequence spans 79 residues: Acyl carrier protein (79 aa).

The region spanning 2–77 (SDIADKVKKI…DAIDYIEKQK (76 aa)) is the Carrier domain. O-(pantetheine 4'-phosphoryl)serine is present on Ser37.

Belongs to the acyl carrier protein (ACP) family. 4'-phosphopantetheine is transferred from CoA to a specific serine of apo-ACP by AcpS. This modification is essential for activity because fatty acids are bound in thioester linkage to the sulfhydryl of the prosthetic group.

Its subcellular location is the cytoplasm. It functions in the pathway lipid metabolism; fatty acid biosynthesis. Its function is as follows. Carrier of the growing fatty acid chain in fatty acid biosynthesis. This Gluconobacter oxydans (strain 621H) (Gluconobacter suboxydans) protein is Acyl carrier protein.